We begin with the raw amino-acid sequence, 328 residues long: D-cysteine desulfhydrase (328 aa).

Lys51 carries the N6-(pyridoxal phosphate)lysine modification.

This sequence belongs to the ACC deaminase/D-cysteine desulfhydrase family. As to quaternary structure, homodimer. It depends on pyridoxal 5'-phosphate as a cofactor.

The enzyme catalyses D-cysteine + H2O = hydrogen sulfide + pyruvate + NH4(+) + H(+). Functionally, catalyzes the alpha,beta-elimination reaction of D-cysteine and of several D-cysteine derivatives. It could be a defense mechanism against D-cysteine. The chain is D-cysteine desulfhydrase from Klebsiella pneumoniae (strain 342).